The chain runs to 316 residues: Pseudouridine-5'-phosphate glycosidase (316 aa).

Glutamate 31 functions as the Proton donor in the catalytic mechanism. Substrate-binding residues include lysine 92 and valine 112. Residue aspartate 144 coordinates Mn(2+). Serine 146–aspartate 148 contacts substrate. Lysine 165 functions as the Nucleophile in the catalytic mechanism.

This sequence belongs to the pseudouridine-5'-phosphate glycosidase family. In terms of assembly, homotrimer. Mn(2+) serves as cofactor.

The enzyme catalyses D-ribose 5-phosphate + uracil = psi-UMP + H2O. Its function is as follows. Catalyzes the reversible cleavage of pseudouridine 5'-phosphate (PsiMP) to ribose 5-phosphate and uracil. Functions biologically in the cleavage direction, as part of a pseudouridine degradation pathway. Part of an operon that could be involved in the biosynthesis of the blue pigment indigoidine, which is implicated in pathogenicity and protection from oxidative stress. The chain is Pseudouridine-5'-phosphate glycosidase from Dickeya dadantii (strain 3937) (Erwinia chrysanthemi (strain 3937)).